A 259-amino-acid chain; its full sequence is Global transcriptional regulator CodY (259 aa).

A GAF domain region spans residues 1-155; it reads MNLLEKTRKI…GATVVGMEIL (155 aa). The H-T-H motif DNA-binding region spans 203–222; sequence ASKIADRVGITRSVIVNALR. S215 is modified (phosphoserine).

It belongs to the CodY family.

The protein localises to the cytoplasm. Its function is as follows. DNA-binding global transcriptional regulator which is involved in the adaptive response to starvation and acts by directly or indirectly controlling the expression of numerous genes in response to nutrient availability. During rapid exponential growth, CodY is highly active and represses genes whose products allow adaptation to nutrient depletion. In Anoxybacillus flavithermus (strain DSM 21510 / WK1), this protein is Global transcriptional regulator CodY.